The chain runs to 430 residues: N-acylneuraminate cytidylyltransferase A (430 aa).

Positions 1–29 (MDAVNENGKRAMKDDSHGNSTSPKRRKSR) are disordered. Over residues 7–17 (NGKRAMKDDSH) the composition is skewed to basic and acidic residues. Positions 9-27 (KRAMKDDSHGNSTSPKRRK) match the Bipartite nuclear localization signal motif. Residues arginine 38, asparagine 48, arginine 97, serine 106, serine 108, and glutamine 129 each contribute to the substrate site. Arginine 187 is a catalytic residue.

Belongs to the CMP-NeuNAc synthase family. As to quaternary structure, homotetramer.

The protein localises to the nucleus. The enzyme catalyses an N-acylneuraminate + CTP = a CMP-N-acyl-beta-neuraminate + diphosphate. The protein operates within amino-sugar metabolism; N-acetylneuraminate metabolism. Catalyzes the activation of N-acetylneuraminic acid (NeuNAc) to cytidine 5'-monophosphate N-acetylneuraminic acid (CMP-NeuNAc), a substrate required for the addition of sialic acid. Also has activity towards N-glycolylneuraminic acid (Neu5Gc). Has weak activity towards 2-keto-3-deoxy-D-glycero-D-galacto-nononic acid (KDN). The sequence is that of N-acylneuraminate cytidylyltransferase A from Danio rerio (Zebrafish).